Consider the following 120-residue polypeptide: Ribosome-binding factor A (120 aa).

Belongs to the RbfA family. As to quaternary structure, monomer. Binds 30S ribosomal subunits, but not 50S ribosomal subunits or 70S ribosomes.

It is found in the cytoplasm. Its function is as follows. One of several proteins that assist in the late maturation steps of the functional core of the 30S ribosomal subunit. Associates with free 30S ribosomal subunits (but not with 30S subunits that are part of 70S ribosomes or polysomes). Required for efficient processing of 16S rRNA. May interact with the 5'-terminal helix region of 16S rRNA. In Clostridium botulinum (strain ATCC 19397 / Type A), this protein is Ribosome-binding factor A.